Here is an 803-residue protein sequence, read N- to C-terminus: Translation initiation factor IF-2 (803 aa).

A compositionally biased stretch (basic and acidic residues) spans 65 to 75; it reads PDKVEEKKEHT. Positions 65-186 are disordered; that stretch reads PDKVEEKKEH…PKSRKSKTLK (122 aa). A compositionally biased stretch (basic residues) spans 175 to 185; sequence NKPKSRKSKTL. The region spanning 300-468 is the tr-type G domain; that stretch reads IRPPVVTIMG…ILLTADAALE (169 aa). The interval 309–316 is G1; that stretch reads GHVDHGKT. 309–316 provides a ligand contact to GTP; that stretch reads GHVDHGKT. The segment at 334 to 338 is G2; it reads GITQH. The interval 355–358 is G3; that stretch reads DTPG. GTP contacts are provided by residues 355–359 and 409–412; these read DTPGH and NKID. Positions 409–412 are G4; it reads NKID. The segment at 445–447 is G5; it reads SAK.

This sequence belongs to the TRAFAC class translation factor GTPase superfamily. Classic translation factor GTPase family. IF-2 subfamily.

Its subcellular location is the cytoplasm. One of the essential components for the initiation of protein synthesis. Protects formylmethionyl-tRNA from spontaneous hydrolysis and promotes its binding to the 30S ribosomal subunits. Also involved in the hydrolysis of GTP during the formation of the 70S ribosomal complex. In Tropheryma whipplei (strain TW08/27) (Whipple's bacillus), this protein is Translation initiation factor IF-2.